The primary structure comprises 355 residues: Tetraacyldisaccharide 4'-kinase (355 aa).

48–55 (SVGGTGKT) lines the ATP pocket.

This sequence belongs to the LpxK family.

The catalysed reaction is a lipid A disaccharide + ATP = a lipid IVA + ADP + H(+). It functions in the pathway glycolipid biosynthesis; lipid IV(A) biosynthesis; lipid IV(A) from (3R)-3-hydroxytetradecanoyl-[acyl-carrier-protein] and UDP-N-acetyl-alpha-D-glucosamine: step 6/6. Transfers the gamma-phosphate of ATP to the 4'-position of a tetraacyldisaccharide 1-phosphate intermediate (termed DS-1-P) to form tetraacyldisaccharide 1,4'-bis-phosphate (lipid IVA). In Pelodictyon phaeoclathratiforme (strain DSM 5477 / BU-1), this protein is Tetraacyldisaccharide 4'-kinase.